The primary structure comprises 412 residues: MKILVIGSGGREHALAKKFMESPQVEEVFVAPGNSGMEKDGIQIVDISELSNDKLVKFAQNQNIGLTFVGPETALMNGVVDAFIKAELPIFGPNKMAAELEGSKDFAKSIMKKYGVPTADYATFDSLEPALAYLDEKGVPLVIKADGLAAGKGVTVAFDIETAKSALADIFSGSQGKVVIEEFLDGEEFSLFSFIHDGKIYPMPIAQDHKRAFDGDKGPNTGGMGAYSPVLHISKEVVNEALEKVVKPTVAGMIEEGKSFTGVLYAGLILTEDGVKTIEFNARFGDPETQVVLPRLKSDLAQAIIDILAGNEPTLEWLESGVTLGVVVAAEGYPSQAKLGLILPEIPEGLNVYYAGVSKNENNQLISSGGRVYLVSETGEDVKSTQKLLYEKLDKLENDGFFYRHDIGSRAI.

The ATP-grasp domain maps to Lys-108 to Ala-309. Leu-134 to Ser-190 contacts ATP. 2 residues coordinate Mg(2+): Glu-279 and Asn-281.

It belongs to the GARS family. Mg(2+) is required as a cofactor. The cofactor is Mn(2+).

It catalyses the reaction 5-phospho-beta-D-ribosylamine + glycine + ATP = N(1)-(5-phospho-beta-D-ribosyl)glycinamide + ADP + phosphate + H(+). It functions in the pathway purine metabolism; IMP biosynthesis via de novo pathway; N(1)-(5-phospho-D-ribosyl)glycinamide from 5-phospho-alpha-D-ribose 1-diphosphate: step 2/2. This is Phosphoribosylamine--glycine ligase from Lactococcus lactis subsp. lactis (strain IL1403) (Streptococcus lactis).